We begin with the raw amino-acid sequence, 442 residues long: Enolase 1 (442 aa).

Residues 73-140 form a binds human collagen region; that stretch reads KLIAKEIVGY…YNYLGGFNAH (68 aa). Glutamine 163 contributes to the (2R)-2-phosphoglycerate binding site. Glutamate 205 serves as the catalytic Proton donor. Mg(2+) is bound by residues aspartate 242, glutamate 290, and aspartate 317. (2R)-2-phosphoglycerate is bound by residues lysine 342, arginine 371, serine 372, and lysine 393. Lysine 342 acts as the Proton acceptor in catalysis.

The protein belongs to the enolase family. The cofactor is Mg(2+).

The protein resides in the cytoplasm. It localises to the secreted. The protein localises to the cell surface. It catalyses the reaction (2R)-2-phosphoglycerate = phosphoenolpyruvate + H2O. It functions in the pathway carbohydrate degradation; glycolysis; pyruvate from D-glyceraldehyde 3-phosphate: step 4/5. Catalyzes the reversible conversion of 2-phosphoglycerate (2-PG) into phosphoenolpyruvate (PEP). It is essential for the degradation of carbohydrates via glycolysis. Functionally, 'Moonlights' as a collagen receptor. Binds host (human) collagen, which may contribute to pathogenicity. This chain is Enolase 1, found in Lactiplantibacillus plantarum (strain ATCC BAA-793 / NCIMB 8826 / WCFS1) (Lactobacillus plantarum).